We begin with the raw amino-acid sequence, 346 residues long: Formimidoylglutamase (346 aa).

Residues H145, D180, H182, D184, D271, and D273 each coordinate Mn(2+).

This sequence belongs to the arginase family. Mn(2+) serves as cofactor.

The enzyme catalyses N-formimidoyl-L-glutamate + H2O = formamide + L-glutamate. It participates in amino-acid degradation; L-histidine degradation into L-glutamate; L-glutamate from N-formimidoyl-L-glutamate (hydrolase route): step 1/1. Catalyzes the conversion of N-formimidoyl-L-glutamate to L-glutamate and formamide. The chain is Formimidoylglutamase from Psychrobacter cryohalolentis (strain ATCC BAA-1226 / DSM 17306 / VKM B-2378 / K5).